Consider the following 768-residue polypeptide: Vitamin B12-dependent ribonucleoside-diphosphate reductase (768 aa).

An ATP-cone domain is found at Lys3–Arg97. Substrate contacts are provided by residues Ser234, Ala249 to Cys250, Gly278, Asn432 to Glu436, and Pro579 to Ile583. A disulfide bridge connects residues Cys250 and Cys445. The active-site Proton acceptor is the Asn432. Catalysis depends on Cys434, which acts as the Cysteine radical intermediate. Residue Glu436 is the Proton acceptor of the active site.

It belongs to the ribonucleoside diphosphate reductase class-2 family. Monomer. Adenosylcob(III)alamin is required as a cofactor.

It carries out the reaction a 2'-deoxyribonucleoside 5'-diphosphate + [thioredoxin]-disulfide + H2O = a ribonucleoside 5'-diphosphate + [thioredoxin]-dithiol. In terms of biological role, provides the precursors necessary for DNA synthesis. Catalyzes the biosynthesis of deoxyribonucleotides from the corresponding ribonucleotides. The protein is Vitamin B12-dependent ribonucleoside-diphosphate reductase of Thermoplasma acidophilum (strain ATCC 25905 / DSM 1728 / JCM 9062 / NBRC 15155 / AMRC-C165).